Reading from the N-terminus, the 229-residue chain is 2-C-methyl-D-erythritol 4-phosphate cytidylyltransferase (229 aa).

The protein belongs to the IspD/TarI cytidylyltransferase family. IspD subfamily.

The enzyme catalyses 2-C-methyl-D-erythritol 4-phosphate + CTP + H(+) = 4-CDP-2-C-methyl-D-erythritol + diphosphate. It participates in isoprenoid biosynthesis; isopentenyl diphosphate biosynthesis via DXP pathway; isopentenyl diphosphate from 1-deoxy-D-xylulose 5-phosphate: step 2/6. Its function is as follows. Catalyzes the formation of 4-diphosphocytidyl-2-C-methyl-D-erythritol from CTP and 2-C-methyl-D-erythritol 4-phosphate (MEP). In Bacillus pumilus (strain SAFR-032), this protein is 2-C-methyl-D-erythritol 4-phosphate cytidylyltransferase.